Consider the following 324-residue polypeptide: Olfactory receptor 6K2 (324 aa).

The Extracellular portion of the chain corresponds to 1-25; that stretch reads MESPNRTTIQEFIFSAFPYSWVKSV. A glycan (N-linked (GlcNAc...) asparagine) is linked at asparagine 5. A helical membrane pass occupies residues 26 to 46; that stretch reads VCFVPLLFIYAFIVVGNLVII. The Cytoplasmic portion of the chain corresponds to 47-54; that stretch reads TVVQLNTH. The chain crosses the membrane as a helical span at residues 55–75; that stretch reads LHTPMYTFISALSFLEIWYTT. The Extracellular portion of the chain corresponds to 76–98; it reads ATIPKMLSSLLSERSISFNGCLL. An intrachain disulfide couples cysteine 96 to cysteine 188. A helical transmembrane segment spans residues 99–119; it reads QMYFFHSTGICEVCLLTVMAF. The Cytoplasmic portion of the chain corresponds to 120–138; it reads DHYLAICSPLHYPSIMTPK. Residues 139–159 traverse the membrane as a helical segment; that stretch reads LCTQLTLSCCVCGFITPLPEI. At 160-198 the chain is on the extracellular side; the sequence is AWISTLPFCGSNHLEHIFCDFLPVLRLACTDTRAIVMIQ. Residues 199 to 218 form a helical membrane-spanning segment; sequence VVDVIHAVEIITAVMLIFMS. The Cytoplasmic segment spans residues 219 to 238; that stretch reads YDGIVAVILRIHSAGGRRTA. A helical membrane pass occupies residues 239–259; the sequence is FSTCVSHFIVFSLFFGSVTLM. Residues 260–272 are Extracellular-facing; sequence YLRFSATYSLFWD. Residues 273-293 form a helical membrane-spanning segment; the sequence is IAIALAFAVLSPFFNPIIYSL. The Cytoplasmic segment spans residues 294–324; sequence RNKEIKEAIKKHIGQAKIFFSVRPGTSSKIF.

The protein belongs to the G-protein coupled receptor 1 family.

It is found in the cell membrane. In terms of biological role, odorant receptor. In Homo sapiens (Human), this protein is Olfactory receptor 6K2 (OR6K2).